Reading from the N-terminus, the 303-residue chain is Caspase-7 (303 aa).

Positions 1 to 21 (MADDQGCIEEQGVEDSANEDS) are enriched in acidic residues. A disordered region spans residues 1-30 (MADDQGCIEEQGVEDSANEDSVDAKPDRSS). A2 carries the post-translational modification N-acetylalanine. Positions 2-23 (ADDQGCIEEQGVEDSANEDSVD) are cleaved as a propeptide — N-terminally processed. S30 is subject to Phosphoserine; by PAK2. S37 bears the Phosphoserine mark. Residues 38–41 (KKKK) are exosite. Residues 76–87 (KNFDKVTGMGVR) are loop L1. H144 is a catalytic residue. T173 bears the Phosphothreonine; by PAK2 mark. C186 is a catalytic residue. Positions 187-196 (RGTELDDGIQ) are loop L2. Residues 199–206 (SGPINDTD) constitute a propeptide that is removed on maturation. Residues 226-238 (VPGYYSWRSPGRG) are loop L3. R233 is modified ((Microbial infection) ADP-riboxanated arginine). S239 is modified (phosphoserine; by PAK2). Residues 274 to 288 (ESQSDDPHFHEKKQI) form a loop L4 region.

The protein belongs to the peptidase C14A family. Heterotetramer that consists of two anti-parallel arranged heterodimers, each one formed by a 20 kDa (p20) and a 11 kDa (p11) subunit. Interacts with XIAP (via its second BIR domain); inhibiting CASP7 activity. Interacts with BIRC6/bruce. Interacts with ATXN3 (short isoform 1). Interacts with HSPA5. In terms of processing, cleavage by different proteases, such as granzyme B (GZMB), caspase-1 (CASP1), caspase-8 (CASP8), caspase-9 (CASP9) or caspase-10 (CASP10) generate the two active subunits. Its involvement in different programmed cell death processes is probably specified by the protease that activates CASP7. Cleaved and activated by initiator caspases (CASP8, CASP9 and/or CASP10), leading to execution phase of apoptosis. Cleavage and maturation by GZMB regulates granzyme-mediated programmed cell death. Cleaved and activated by CASP1 in response to bacterial infection. Propeptide domains can also be cleaved efficiently by CASP3. Active heterodimers between the small subunit of caspase-7 and the large subunit of CASP3, and vice versa, also occur. Also cleaved at the N-terminus at alternative sites by CAPN1, leading to its activation. Post-translationally, phosphorylation at Ser-30 and Ser-239 by PAK2 inhibits its activity. Phosphorylation at Ser-30 prevents cleavage and activation by initiator caspase CASP9, while phosphorylation at Ser-239 prevents thiol protease activity by preventing substrate-binding. (Microbial infection) ADP-riboxanation by C.violaceum CopC blocks CASP7 processing, preventing CASP7 activation and ability to recognize and cleave substrates. In terms of processing, ubiquitinated by BIRC6; this activity is inhibited by DIABLO/SMAC. As to expression, highly expressed in lung, skeletal muscle, liver, kidney, spleen and heart, and moderately in testis. No expression in the brain.

It is found in the cytoplasm. The protein resides in the cytosol. Its subcellular location is the nucleus. The protein localises to the secreted. It localises to the extracellular space. The catalysed reaction is Strict requirement for an Asp residue at position P1 and has a preferred cleavage sequence of Asp-Glu-Val-Asp-|-.. Its activity is regulated as follows. During activation, the N-terminal disordered prodomain is removed by cleavage. Concomitantly, double cleavage gives rise to a large Caspase-7 subunit p20 and a small Caspase-7 subunit p11. The two large and two small subunits then assemble to form the active CASP7 complex. Can be cleaved and activated by different caspases, depending on the context. Cleaved and activated by initiator caspases (CASP8, CASP9 and/or CASP10), leading to execution phase of apoptosis. Inhibited by XIAP, which directly binds to the active site pocket and obstructs substrate entry. Cleavage and maturation by GZMB regulates granzyme-mediated programmed cell death. Cleavage and maturation by CASP1 regulates pyroptosis. Phosphorylation at Ser-30 and Ser-239 by PAK2 inhibits its activity. Inhibited by isatin sulfonamides. Inhibited by 2-(2,4-Dichlorophenoxy)- N-(2-mercapto-ethyl)-acetamide (DICA) and 5-Fluoro-1H-indole-2- carboxylic acid (2-mercapto-ethyl)-amide (FICA) allosteric inhibitors, which disrupt an interaction between Arg-187 and Tyr-223. Specifically inhibited by DARPin D7.18 and D7.43, which specifically bind to the precursor CASP7 and prevent its processing and activation. Inhibited by BIRC6; following inhibition of BIRC6-caspase binding by DIABLO/SMAC, BIRC6 is subjected to caspase cleavage, leading to an increase in active caspases. Its function is as follows. Thiol protease involved in different programmed cell death processes, such as apoptosis, pyroptosis or granzyme-mediated programmed cell death, by proteolytically cleaving target proteins. Has a marked preference for Asp-Glu-Val-Asp (DEVD) consensus sequences, with some plasticity for alternate non-canonical sequences. Its involvement in the different programmed cell death processes is probably determined by upstream proteases that activate CASP7. Acts as an effector caspase involved in the execution phase of apoptosis: following cleavage and activation by initiator caspases (CASP8, CASP9 and/or CASP10), mediates execution of apoptosis by catalyzing cleavage of proteins, such as CLSPN, PARP1, PTGES3 and YY1. Compared to CASP3, acts as a minor executioner caspase and cleaves a limited set of target proteins. Acts as a key regulator of the inflammatory response in response to bacterial infection by catalyzing cleavage and activation of the sphingomyelin phosphodiesterase SMPD1 in the extracellular milieu, thereby promoting membrane repair. Regulates pyroptosis in intestinal epithelial cells: cleaved and activated by CASP1 in response to S.typhimurium infection, promoting its secretion to the extracellular milieu, where it catalyzes activation of SMPD1, generating ceramides that repair membranes and counteract the action of gasdermin-D (GSDMD) pores. Regulates granzyme-mediated programmed cell death in hepatocytes: cleaved and activated by granzyme B (GZMB) in response to bacterial infection, promoting its secretion to the extracellular milieu, where it catalyzes activation of SMPD1, generating ceramides that repair membranes and counteract the action of perforin (PRF1) pores. Following cleavage by CASP1 in response to inflammasome activation, catalyzes processing and inactivation of PARP1, alleviating the transcription repressor activity of PARP1. Acts as an inhibitor of type I interferon production during virus-induced apoptosis by mediating cleavage of antiviral proteins CGAS, IRF3 and MAVS, thereby preventing cytokine overproduction. Cleaves and activates sterol regulatory element binding proteins (SREBPs). Cleaves phospholipid scramblase proteins XKR4, XKR8 and XKR9. In case of infection, catalyzes cleavage of Kaposi sarcoma-associated herpesvirus protein ORF57, thereby preventing expression of viral lytic genes. Cleaves BIRC6 following inhibition of BIRC6-caspase binding by DIABLO/SMAC. Lacks enzymatic activity. The sequence is that of Caspase-7 from Homo sapiens (Human).